The primary structure comprises 459 residues: Protein FAM90A27P (459 aa).

A compositionally biased stretch (basic residues) spans 1–10 (MARHSVHHQA). 4 disordered regions span residues 1–41 (MARH…ESRV), 74–136 (SHKE…WKEP), 153–239 (HTTK…ALQP), and 259–459 (PDAD…SDSD). The span at 125–136 (PQEKMQEAWKEP) shows a compositional bias: basic and acidic residues. The segment covering 184–194 (HNDSPQLSTCG) has biased composition (polar residues). Low complexity predominate over residues 341–353 (KATAETAATKTAT). Positions 415–427 (PPENSASAQSPRF) are enriched in polar residues.

Belongs to the FAM90 family.

The protein is Protein FAM90A27P (FAM90A27P) of Homo sapiens (Human).